The following is a 209-amino-acid chain: MELSVFNIKGEDTGRKVTLNDAIFGIEPNDHAIYLDVKQYLANQRQGTHKSKERSEVSGSTRKLIRQKGGGGARRGDINSPVLVGGGRVFGPKPRDYEFKLNKKVKSLARKSALSYKAKNNAIVVVEDFTMEAPKTKEFITIAKNLKVADKKLLMVLPEKNNLVYLSARNLEKASVITASELNTYAVLNAVNLVLTESSVAVVEQNFKA.

Residues 44 to 77 (QRQGTHKSKERSEVSGSTRKLIRQKGGGGARRGD) are disordered.

This sequence belongs to the universal ribosomal protein uL4 family. Part of the 50S ribosomal subunit.

Functionally, one of the primary rRNA binding proteins, this protein initially binds near the 5'-end of the 23S rRNA. It is important during the early stages of 50S assembly. It makes multiple contacts with different domains of the 23S rRNA in the assembled 50S subunit and ribosome. Its function is as follows. Forms part of the polypeptide exit tunnel. In Parabacteroides distasonis (strain ATCC 8503 / DSM 20701 / CIP 104284 / JCM 5825 / NCTC 11152), this protein is Large ribosomal subunit protein uL4.